A 239-amino-acid polypeptide reads, in one-letter code: Large ribosomal subunit protein uL1 (239 aa).

This sequence belongs to the universal ribosomal protein uL1 family. In terms of assembly, part of the 50S ribosomal subunit.

Functionally, binds directly to 23S rRNA. The L1 stalk is quite mobile in the ribosome, and is involved in E site tRNA release. Protein L1 is also a translational repressor protein, it controls the translation of the L11 operon by binding to its mRNA. This is Large ribosomal subunit protein uL1 from Rickettsia canadensis (strain McKiel).